The chain runs to 327 residues: tRNA pseudouridine synthase B (327 aa).

Residue aspartate 69 is the Nucleophile of the active site. Positions 97, 201, and 222 each coordinate substrate.

The protein belongs to the pseudouridine synthase TruB family. Type 1 subfamily.

The enzyme catalyses uridine(55) in tRNA = pseudouridine(55) in tRNA. Responsible for synthesis of pseudouridine from uracil-55 in the psi GC loop of transfer RNAs. The polypeptide is tRNA pseudouridine synthase B (Wigglesworthia glossinidia brevipalpis).